Here is a 374-residue protein sequence, read N- to C-terminus: Alanine racemase (374 aa).

Catalysis depends on Lys-34, which acts as the Proton acceptor; specific for D-alanine. Lys-34 bears the N6-(pyridoxal phosphate)lysine mark. Arg-147 is a binding site for substrate. Tyr-271 serves as the catalytic Proton acceptor; specific for L-alanine. Residue Met-319 participates in substrate binding.

It belongs to the alanine racemase family. Pyridoxal 5'-phosphate is required as a cofactor.

It catalyses the reaction L-alanine = D-alanine. The protein operates within amino-acid biosynthesis; D-alanine biosynthesis; D-alanine from L-alanine: step 1/1. In terms of biological role, catalyzes the interconversion of L-alanine and D-alanine. May also act on other amino acids. This is Alanine racemase (alr) from Haemophilus ducreyi (strain 35000HP / ATCC 700724).